A 380-amino-acid polypeptide reads, in one-letter code: 3-isopropylmalate dehydratase large subunit 2 (380 aa).

Residues cysteine 262, cysteine 320, and cysteine 323 each coordinate [4Fe-4S] cluster.

The protein belongs to the aconitase/IPM isomerase family. LeuC type 2 subfamily. As to quaternary structure, heterodimer of LeuC and LeuD. [4Fe-4S] cluster is required as a cofactor.

The catalysed reaction is (2R,3S)-3-isopropylmalate = (2S)-2-isopropylmalate. Its pathway is amino-acid biosynthesis; L-leucine biosynthesis; L-leucine from 3-methyl-2-oxobutanoate: step 2/4. In terms of biological role, catalyzes the isomerization between 2-isopropylmalate and 3-isopropylmalate, via the formation of 2-isopropylmaleate. This Pyrococcus furiosus (strain ATCC 43587 / DSM 3638 / JCM 8422 / Vc1) protein is 3-isopropylmalate dehydratase large subunit 2.